We begin with the raw amino-acid sequence, 229 residues long: MSSLFQTYGRWDIDIKKAKGTYVEDQNGKTYLDFIQGIAVSNLGHCHEAVTEAVKKQLDSVWHVSNLFQNSLQEQAAQKLAAHSAGDLVFFCNSGAEANEGAIKLARKATGKTKIITFLQSFHGRTYAGMAATGQDKIKTGFGPMLGGFHYLPYNDPSAFKALGEEGDIAAVMLETVQGEGGVNPASAEFLSAVQSFCKEKQALLIIDEIQTGIGRTGTRFAYQHFGLS.

Pyridoxal 5'-phosphate is bound by residues 95 to 96 (GA) and Phe122. Arg125 is a N(2)-acetyl-L-ornithine binding site. 208–211 (DEIQ) contributes to the pyridoxal 5'-phosphate binding site.

This sequence belongs to the class-III pyridoxal-phosphate-dependent aminotransferase family. ArgD subfamily. As to quaternary structure, homodimer. Pyridoxal 5'-phosphate serves as cofactor.

The protein localises to the cytoplasm. It carries out the reaction N(2)-acetyl-L-ornithine + 2-oxoglutarate = N-acetyl-L-glutamate 5-semialdehyde + L-glutamate. It functions in the pathway amino-acid biosynthesis; L-arginine biosynthesis; N(2)-acetyl-L-ornithine from L-glutamate: step 4/4. The chain is Acetylornithine aminotransferase (argD) from Bacillus amyloliquefaciens (Bacillus velezensis).